Here is a 374-residue protein sequence, read N- to C-terminus: Probable tRNA pseudouridine synthase D (374 aa).

Residue Asp-81 is the Nucleophile of the active site. Residues 141–340 (VFPNYFDVQR…RKGFQKMYDL (200 aa)) form the TRUD domain.

It belongs to the pseudouridine synthase TruD family.

It catalyses the reaction uridine(13) in tRNA = pseudouridine(13) in tRNA. Functionally, could be responsible for synthesis of pseudouridine from uracil-13 in transfer RNAs. The chain is Probable tRNA pseudouridine synthase D from Nanoarchaeum equitans (strain Kin4-M).